Here is a 181-residue protein sequence, read N- to C-terminus: Oligoribonuclease (181 aa).

Residues 8 to 171 form the Exonuclease domain; the sequence is LIWIDLEMTG…DDIRESVAEL (164 aa). The active site involves Tyr129.

It belongs to the oligoribonuclease family.

Its subcellular location is the cytoplasm. Its function is as follows. 3'-to-5' exoribonuclease specific for small oligoribonucleotides. This chain is Oligoribonuclease, found in Enterobacter sp. (strain 638).